The following is a 694-amino-acid chain: Elongation factor G (694 aa).

One can recognise a tr-type G domain in the interval 10-285 (EKTRNIGIMA…AVLDYLPSPV (276 aa)). Residues 19–26 (AHIDAGKT), 83–87 (DTPGH), and 137–140 (NKMD) each bind GTP.

The protein belongs to the TRAFAC class translation factor GTPase superfamily. Classic translation factor GTPase family. EF-G/EF-2 subfamily.

Its subcellular location is the cytoplasm. Its function is as follows. Catalyzes the GTP-dependent ribosomal translocation step during translation elongation. During this step, the ribosome changes from the pre-translocational (PRE) to the post-translocational (POST) state as the newly formed A-site-bound peptidyl-tRNA and P-site-bound deacylated tRNA move to the P and E sites, respectively. Catalyzes the coordinated movement of the two tRNA molecules, the mRNA and conformational changes in the ribosome. The chain is Elongation factor G from Limosilactobacillus fermentum (strain NBRC 3956 / LMG 18251) (Lactobacillus fermentum).